Here is a 263-residue protein sequence, read N- to C-terminus: Coiled-coil domain-containing protein 172 (263 aa).

Residues 13-191 (TEHQAEESRR…LKVLKDEETE (179 aa)) are a coiled coil.

The protein belongs to the CCDC172 family. In terms of assembly, may interact with TEKT2. Detected in spermatozoa (at protein level). Predominantly expressed in testis and in spermatozoa from the caput and corpus epididymis.

It localises to the cytoplasm. Its subcellular location is the cell projection. The protein resides in the cilium. The polypeptide is Coiled-coil domain-containing protein 172 (Ccdc172) (Rattus norvegicus (Rat)).